A 297-amino-acid chain; its full sequence is tRNA dimethylallyltransferase (297 aa).

15 to 22 (GPTASGKS) lines the ATP pocket. 17 to 22 (TASGKS) serves as a coordination point for substrate. 2 interaction with substrate tRNA regions span residues 40–43 (DSMQ) and 164–168 (QRIVR).

This sequence belongs to the IPP transferase family. Monomer. It depends on Mg(2+) as a cofactor.

The catalysed reaction is adenosine(37) in tRNA + dimethylallyl diphosphate = N(6)-dimethylallyladenosine(37) in tRNA + diphosphate. Its function is as follows. Catalyzes the transfer of a dimethylallyl group onto the adenine at position 37 in tRNAs that read codons beginning with uridine, leading to the formation of N6-(dimethylallyl)adenosine (i(6)A). This Rhizobium etli (strain CIAT 652) protein is tRNA dimethylallyltransferase.